A 63-amino-acid polypeptide reads, in one-letter code: uncharacterized protein (63 aa).

This is an uncharacterized protein from Thermoproteus tenax virus 1 (strain KRA1) (TTV1).